The following is a 151-amino-acid chain: MGRMHSRGKGISSSAIPYKRTPPSWVKTAAADVEEMIMKAAKKGQMPSQIGVVLRDQHGIPLVKSVTGSKILRILKAHGLAPEIPEDLYFLIKKAVAIRKHLERNRKDKDSKFRLILVESRIHRLARYYKRTKKLPPTWKYESTTASTLVA.

It belongs to the universal ribosomal protein uS15 family.

The polypeptide is Small ribosomal subunit protein uS15z (Oryza sativa subsp. japonica (Rice)).